We begin with the raw amino-acid sequence, 227 residues long: Phosphoribosylformylglycinamidine synthase subunit PurQ (227 aa).

Residues Phe3–Thr225 form the Glutamine amidotransferase type-1 domain. Cys86 serves as the catalytic Nucleophile. Active-site residues include His194 and Glu196.

In terms of assembly, part of the FGAM synthase complex composed of 1 PurL, 1 PurQ and 2 PurS subunits.

The protein localises to the cytoplasm. It catalyses the reaction N(2)-formyl-N(1)-(5-phospho-beta-D-ribosyl)glycinamide + L-glutamine + ATP + H2O = 2-formamido-N(1)-(5-O-phospho-beta-D-ribosyl)acetamidine + L-glutamate + ADP + phosphate + H(+). The catalysed reaction is L-glutamine + H2O = L-glutamate + NH4(+). It participates in purine metabolism; IMP biosynthesis via de novo pathway; 5-amino-1-(5-phospho-D-ribosyl)imidazole from N(2)-formyl-N(1)-(5-phospho-D-ribosyl)glycinamide: step 1/2. Part of the phosphoribosylformylglycinamidine synthase complex involved in the purines biosynthetic pathway. Catalyzes the ATP-dependent conversion of formylglycinamide ribonucleotide (FGAR) and glutamine to yield formylglycinamidine ribonucleotide (FGAM) and glutamate. The FGAM synthase complex is composed of three subunits. PurQ produces an ammonia molecule by converting glutamine to glutamate. PurL transfers the ammonia molecule to FGAR to form FGAM in an ATP-dependent manner. PurS interacts with PurQ and PurL and is thought to assist in the transfer of the ammonia molecule from PurQ to PurL. The protein is Phosphoribosylformylglycinamidine synthase subunit PurQ of Bacillus pumilus (strain SAFR-032).